Consider the following 450-residue polypeptide: Phosphoglucosamine mutase (450 aa).

Residue Ser102 is the Phosphoserine intermediate of the active site. Residues Ser102, Asp243, Asp245, and Asp247 each coordinate Mg(2+). Ser102 bears the Phosphoserine mark.

The protein belongs to the phosphohexose mutase family. Requires Mg(2+) as cofactor. In terms of processing, activated by phosphorylation.

The enzyme catalyses alpha-D-glucosamine 1-phosphate = D-glucosamine 6-phosphate. Catalyzes the conversion of glucosamine-6-phosphate to glucosamine-1-phosphate. This is Phosphoglucosamine mutase from Rhizobium etli (strain CIAT 652).